Reading from the N-terminus, the 505-residue chain is ATP synthase subunit alpha (505 aa).

Residue 169 to 176 coordinates ATP; that stretch reads GDRQTGKT.

Belongs to the ATPase alpha/beta chains family. In terms of assembly, F-type ATPases have 2 components, CF(1) - the catalytic core - and CF(0) - the membrane proton channel. CF(1) has five subunits: alpha(3), beta(3), gamma(1), delta(1), epsilon(1). CF(0) has three main subunits: a(1), b(2) and c(9-12). The alpha and beta chains form an alternating ring which encloses part of the gamma chain. CF(1) is attached to CF(0) by a central stalk formed by the gamma and epsilon chains, while a peripheral stalk is formed by the delta and b chains.

The protein localises to the cell membrane. The catalysed reaction is ATP + H2O + 4 H(+)(in) = ADP + phosphate + 5 H(+)(out). Its function is as follows. Produces ATP from ADP in the presence of a proton gradient across the membrane. The alpha chain is a regulatory subunit. The chain is ATP synthase subunit alpha from Clostridium acetobutylicum (strain ATCC 824 / DSM 792 / JCM 1419 / IAM 19013 / LMG 5710 / NBRC 13948 / NRRL B-527 / VKM B-1787 / 2291 / W).